Here is a 158-residue protein sequence, read N- to C-terminus: NADH-quinone oxidoreductase subunit B (158 aa).

Residues cysteine 37, cysteine 38, cysteine 102, and cysteine 132 each contribute to the [4Fe-4S] cluster site.

This sequence belongs to the complex I 20 kDa subunit family. In terms of assembly, NDH-1 is composed of 14 different subunits. Subunits NuoB, C, D, E, F, and G constitute the peripheral sector of the complex. It depends on [4Fe-4S] cluster as a cofactor.

The protein resides in the cell inner membrane. The catalysed reaction is a quinone + NADH + 5 H(+)(in) = a quinol + NAD(+) + 4 H(+)(out). NDH-1 shuttles electrons from NADH, via FMN and iron-sulfur (Fe-S) centers, to quinones in the respiratory chain. Couples the redox reaction to proton translocation (for every two electrons transferred, four hydrogen ions are translocated across the cytoplasmic membrane), and thus conserves the redox energy in a proton gradient. This is NADH-quinone oxidoreductase subunit B from Alkalilimnicola ehrlichii (strain ATCC BAA-1101 / DSM 17681 / MLHE-1).